We begin with the raw amino-acid sequence, 471 residues long: DENN domain-containing protein 2D (471 aa).

One can recognise a uDENN domain in the interval 55–204; it reads EYLLVVSLKK…AFPAPGKTVT (150 aa). A cDENN domain is found at 226-359; the sequence is HLEHVDFSSL…LQDDILDSLG (134 aa). The dDENN domain occupies 361–445; it reads GINELKTAEQ…QEAEKSKNPP (85 aa).

In bronchial mucosa, mainly expressed in ciliated and basal epithelial cells and weakly in alveolar cells (at protein level). Tends to be down-regulated in lung cancers, immortalized bronchial epithelial cell lines and precancerous lesions.

It localises to the cytoplasm. Its function is as follows. Guanine nucleotide exchange factor (GEF) which may activate RAB9A and RAB9B. Promotes the exchange of GDP to GTP, converting inactive GDP-bound Rab proteins into their active GTP-bound form. This is DENN domain-containing protein 2D (DENND2D) from Homo sapiens (Human).